The primary structure comprises 633 residues: CDK5 and ABL1 enzyme substrate 1 (633 aa).

The segment covering 1 to 29 (MAAAAAAATTAACSSGSAGTDAAGASGLQ) has biased composition (low complexity). The disordered stretch occupies residues 1-99 (MAAAAAAATT…EGGAAKPGAG (99 aa)). Residues 1–109 (MAAAAAAATT…GACGARTRFS (109 aa)) form an interaction with TDRD7 region. Over residues 51–61 (PPRKPRMDPRR) the composition is skewed to basic and acidic residues. Phosphoserine occurs at positions 168 and 287. Residues 179–492 (QWQPPRPAPL…TTVIDYVKPS (314 aa)) form an interaction with CDK3 region. A Phosphoserine; by CDK2 and CDK3 modification is found at Ser-313. Position 415 is a phosphothreonine (Thr-415).

Belongs to the cyclin family. Found in a complex with p53/TP53. Found in a number of complexes with CDK2, CDK3, CDK5, ABL1, TDRD7, CDK17, CCNA1, CCNE1 and TP73. Interacts with CDK2, CDK3, CDK5, ABL1 and TDRD7. Phosphorylated on Ser-313 by CCNE1/CDK3. Phosphorylated on serine/threonine residues by CDK5 and on tyrosine residues by ABL1. Also phosphorylated in vitro by CCNA1/CDK2, CCNE1/CDK2, CCNA1/CDK3 and CCNE1/CDK3. In terms of tissue distribution, expressed in breast, pancreas, colon, head and neck (at protein level). Strongly decreased in more than half of cases of atypical endometrial hyperplasia and in more than 90% of endometrial cancers.

It localises to the nucleus. It is found in the cytoplasm. Cyclin-dependent kinase binding protein. Enhances cyclin-dependent kinase tyrosine phosphorylation by nonreceptor tyrosine kinases, such as that of CDK5 by activated ABL1, which leads to increased CDK5 activity and is critical for neuronal development, and that of CDK2 by WEE1, which leads to decreased CDK2 activity and growth inhibition. Positively affects neuronal outgrowth. Plays a role as a regulator for p53/p73-induced cell death. The protein is CDK5 and ABL1 enzyme substrate 1 (CABLES1) of Homo sapiens (Human).